The chain runs to 428 residues: MTEAMNITLSTQPADARWGEKATYSINNDGITLHLNGSDDLGLIQRAARKIDGLGIKHVTLAGEGWDTDRSWAFWAGYKGPKGTRKIEWANLDEAGQKELESRLMIIDWVRDTINAPAEELGPEQLAQRAVDLLCKAAGDKMSYRITKGEDLREQNYMGLHTVGRGSERPPVLLALDYNPTGDKQAPVYACLVGKGITFDTGGYSLKQSAFMDSMKSDMGGAATITGALAFAITRGLNKRVKLYLCCADNMVSGNAFKLGDIIRYRNGKNVEVMNTDAEGRLVLADGLIDASAQKPELIIDMATLTGAAKTALGNDYHALFTFDDKLASRLMASAAAENEPFWRLPLAEFHRSQLPSNFAELNNTASAAYPAGASTAAGFLSHFVENYHEGWLHIDCSATYRKAGVEQWSAGATGLGVRTIANLLTAE.

Residues Lys195 and Asp200 each contribute to the Mn(2+) site. The active site involves Lys207. Mn(2+) contacts are provided by Asp218, Asp277, and Glu279. Arg281 is a catalytic residue.

Belongs to the peptidase M17 family. Homohexamer. The cofactor is Mn(2+).

The protein resides in the cytoplasm. It catalyses the reaction Release of an N-terminal amino acid, Xaa, from a peptide or arylamide. Xaa is preferably Glu or Asp but may be other amino acids, including Leu, Met, His, Cys and Gln.. Functionally, probably plays an important role in intracellular peptide degradation. The protein is Peptidase B of Enterobacter sp. (strain 638).